Consider the following 372-residue polypeptide: sn-glycerol-3-phosphate import ATP-binding protein UgpC (372 aa).

Residues 2–233 (LDIQQLVKTY…PASTFVASFI (232 aa)) form the ABC transporter domain. 35–42 (GPSGCGKS) contacts ATP.

Belongs to the ABC transporter superfamily. sn-glycerol-3-phosphate importer (TC 3.A.1.1.3) family. As to quaternary structure, the complex is composed of two ATP-binding proteins (UgpC), two transmembrane proteins (UgpA and UgpE) and a solute-binding protein (UgpB).

The protein resides in the cell inner membrane. It catalyses the reaction sn-glycerol 3-phosphate(out) + ATP + H2O = sn-glycerol 3-phosphate(in) + ADP + phosphate + H(+). In terms of biological role, part of the ABC transporter complex UgpBAEC involved in sn-glycerol-3-phosphate (G3P) import. Responsible for energy coupling to the transport system. The polypeptide is sn-glycerol-3-phosphate import ATP-binding protein UgpC (Vibrio vulnificus (strain YJ016)).